The chain runs to 2496 residues: Non-reducing polyketide synthase adrD (2496 aa).

Residues 15–254 are N-terminal acylcarrier protein transacylase domain (SAT); sequence LVFGPQIAEI…HHASHITAVQ (240 aa). One can recognise a Ketosynthase family 3 (KS3) domain in the interval 387 to 808; it reads ATPIAITGMG…GSNAALVVKQ (422 aa). Catalysis depends on for beta-ketoacyl synthase activity residues Cys552, His687, and His726. The malonyl-CoA:ACP transacylase (MAT) domain stretch occupies residues 914–1223; the sequence is LCFGGQNGNE…QSLDLGGPQG (310 aa). Ser1001 functions as the For acyl/malonyl transferase activity in the catalytic mechanism. The N-terminal hotdog fold stretch occupies residues 1295–1423; the sequence is KEFVQLLTKQ…GEISLHPFGQ (129 aa). One can recognise a PKS/mFAS DH domain in the interval 1295–1602; sequence KEFVQLLTKQ…FTSVSIAGLA (308 aa). A product template (PT) domain region spans residues 1296 to 1601; that stretch reads EFVQLLTKQP…EFTSVSIAGL (306 aa). His1326 serves as the catalytic Proton acceptor; for dehydratase activity. Positions 1451 to 1602 are C-terminal hotdog fold; that stretch reads ESSGLKGFAV…FTSVSIAGLA (152 aa). Asp1509 (proton donor; for dehydratase activity) is an active-site residue. Over residues 1615–1629 the composition is skewed to basic and acidic residues; the sequence is EKASPDLSLRNDSKV. A disordered region spans residues 1615–1645; sequence EKASPDLSLRNDSKVDVNPTPQNTAPVVQPT. A compositionally biased stretch (polar residues) spans 1633–1645; sequence PTPQNTAPVVQPT. Positions 1652 to 1726 constitute a Carrier domain; sequence PGYFVVVQEM…ALVQTIFPDA (75 aa). Ser1686 bears the O-(pantetheine 4'-phosphoryl)serine mark. A methyltransferase (CMeT) domain region spans residues 1888-2121; the sequence is QHRSEHHLLK…GFQWVDWTHN (234 aa). The tract at residues 2151–2496 is thioesterase (TE) domain; that stretch reads RVMNEETVPY…YEFLRDHVRY (346 aa). Catalysis depends on for thioesterase activity residues Ser2274 and Asp2433.

The enzyme catalyses 3 malonyl-CoA + acetyl-CoA + 2 S-adenosyl-L-methionine = 3,5-dimethylorsellinate + 2 S-adenosyl-L-homocysteine + 3 CO2 + 4 CoA. Its pathway is secondary metabolite biosynthesis; terpenoid biosynthesis. Non-reducing polyketide synthase; part of the gene cluster that mediates the biosynthesis of andrastins, meroterpenoid compounds that exhibit inhibitory activity against ras farnesyltransferase, suggesting that they could be promising leads for antitumor agents. The first step of the pathway is the synthesis of 3,5-dimethylorsellinic acid (DMOA) by the polyketide synthase adrD via condensation of one acetyl-CoA starter unit with 3 malonyl-CoA units and 2 methylations. DMAO is then converted to farnesyl-DMAO by the prenyltransferase adrG. The methyltransferase adrK catalyzes the methylation of the carboxyl group of farnesyl-DMAO to farnesyl-DMAO methyl ester which is further converted to epoxyfarnesyl-DMAO methyl ester by the FAD-dependent monooxygenase adrH. The terpene cyclase adrI then catalyzes the carbon skeletal rearrangement to generate the andrastin E, the first compound in the pathway having the andrastin scaffold, with the tetracyclic ring system. The post-cyclization tailoring enzymes adrF, adrE, adrJ, and adrA, are involved in the conversion of andrastin E into andrastin A. The short chain dehydrogenase adrF is responsible for the oxidation of the C-3 a hydroxyl group of andrastin E to yield the corresponding ketone, andrastin D. The ketoreductase adrE stereoselectively reduces the carbonyl moiety to reverse the stereochemistry of the C-3 position to yield andrastin F. The acetyltransferase adrJ is the acetyltransferase that attaches the acetyl group to the C-3 hydroxyl group of andrastin F to yield andrastin C. Finally, the cytochrome P450 monooxygenase adrA catalyzes two sequential oxidation reactions of the C-23 methyl group, to generate the corresponding alcohol andrastin B, and aldehyde andrastin A. This Penicillium rubens (strain ATCC 28089 / DSM 1075 / NRRL 1951 / Wisconsin 54-1255) (Penicillium chrysogenum) protein is Non-reducing polyketide synthase adrD.